The primary structure comprises 433 residues: Glucoside xylosyltransferase 1 (433 aa).

Over Met1–Arg6 the chain is Cytoplasmic. A helical; Signal-anchor for type II membrane protein membrane pass occupies residues Val7–Ser29. The Lumenal segment spans residues Leu30–Ser433. Positions Gln39–Ala64 are disordered. 5 N-linked (GlcNAc...) asparagine glycosylation sites follow: Asn69, Asn166, Asn271, Asn305, and Asn380.

It belongs to the glycosyltransferase 8 family.

The protein localises to the membrane. It catalyses the reaction 3-O-(beta-D-glucosyl)-L-seryl-[EGF-like domain protein] + UDP-alpha-D-xylose = 3-O-[alpha-D-xylosyl-(1-&gt;3)-beta-D-glucosyl]-L-seryl-[EGF-like domain protein] + UDP + H(+). Its function is as follows. Glycosyltransferase which elongates the O-linked glucose attached to EGF-like repeats in the extracellular domain of Notch proteins by catalyzing the addition of xylose. The protein is Glucoside xylosyltransferase 1 (GXYLT1) of Gallus gallus (Chicken).